Here is a 144-residue protein sequence, read N- to C-terminus: Cornifin-A (144 aa).

Positions M1–C41 are disordered. Over residues P13–P24 the composition is skewed to low complexity. 13 consecutive repeat copies span residues P27–A34, P35–H42, P43–N49, P50–H57, P58–H65, P66–N73, P74–Q81, P82–Q89, P90–N97, P98–Q105, P106–H113, P114–H121, and P122–P129. Positions P27–P129 are 13 X 8 AA approximate tandem repeats.

This sequence belongs to the cornifin (SPRR) family. In terms of tissue distribution, expressed in fetal periderm, hair follicles and in the thickened epidermis of the lip and footpad. Also present in the epithelia of various tissues such as the penis, vagina, forestomach, tongue and esophagus.

It is found in the cytoplasm. Functionally, cross-linked envelope protein of keratinocytes. It is a keratinocyte protein that first appears in the cell cytosol, but ultimately becomes cross-linked to membrane proteins by transglutaminase. All that results in the formation of an insoluble envelope beneath the plasma membrane. May participate widely in the construction of cell envelopes in cornifying epithelia characterized by either increased thickness or a requirement for extreme flexibility. The polypeptide is Cornifin-A (Sprr1a) (Mus musculus (Mouse)).